We begin with the raw amino-acid sequence, 443 residues long: Cysteine proteinase B (443 aa).

The N-terminal stretch at 1-27 (MATSRAALCAVAVVCVVLAAACAPARA) is a signal peptide. The propeptide at 28–125 (IHVGTPAAAL…YRKARADLSA (98 aa)) is activation peptide. 2 disulfide bridges follow: C147–C188 and C181–C226. Residue C150 is part of the active site. N-linked (GlcNAc...) asparagine glycosylation is present at N228. C281 and C329 form a disulfide bridge. Catalysis depends on residues H288 and N308.

The protein belongs to the peptidase C1 family.

In Leishmania mexicana, this protein is Cysteine proteinase B (LMCPB).